Reading from the N-terminus, the 1133-residue chain is Early transcription factor large subunit homolog (1133 aa).

Residues 52-352 (KGGRAFFPCD…PNGQPLQRQQ (301 aa)) form the Helicase ATP-binding domain. 99–106 (WQTGTGKS) is a binding site for ATP. The short motif at 281–284 (DEIH) is the DEAH box element. The region spanning 524-724 (MMKDILSIIR…EGDKALRKHA (201 aa)) is the Helicase C-terminal domain.

The protein belongs to the DEAD box helicase family. DEAH subfamily.

The protein localises to the virion. It carries out the reaction ATP + H2O = ADP + phosphate + H(+). Putative initation factor. In African swine fever virus (isolate Tick/South Africa/Pretoriuskop Pr4/1996) (ASFV), this protein is Early transcription factor large subunit homolog.